Here is a 401-residue protein sequence, read N- to C-terminus: Argininosuccinate synthase (401 aa).

9–17 serves as a coordination point for ATP; sequence AYSGGLDTS. Tyr-87 provides a ligand contact to L-citrulline. Position 117 (Gly-117) interacts with ATP. L-aspartate contacts are provided by Thr-119, Asn-123, and Asp-124. Asn-123 is a binding site for L-citrulline. Residues Arg-127, Ser-176, Ser-185, Glu-261, and Tyr-273 each coordinate L-citrulline.

The protein belongs to the argininosuccinate synthase family. Type 1 subfamily. As to quaternary structure, homotetramer.

Its subcellular location is the cytoplasm. The catalysed reaction is L-citrulline + L-aspartate + ATP = 2-(N(omega)-L-arginino)succinate + AMP + diphosphate + H(+). It participates in amino-acid biosynthesis; L-arginine biosynthesis; L-arginine from L-ornithine and carbamoyl phosphate: step 2/3. In Prosthecochloris aestuarii (strain DSM 271 / SK 413), this protein is Argininosuccinate synthase.